A 199-amino-acid chain; its full sequence is Probable GTP-binding protein EngB (199 aa).

Residues 22–196 (NFSEVAFLGR…EDVIINQTLG (175 aa)) enclose the EngB-type G domain. GTP contacts are provided by residues 30 to 37 (GRSNVGKS), 57 to 61 (GKTQL), 82 to 85 (DLPG), 152 to 155 (TKCD), and 175 to 177 (VSN). S37 and T59 together coordinate Mg(2+).

It belongs to the TRAFAC class TrmE-Era-EngA-EngB-Septin-like GTPase superfamily. EngB GTPase family. The cofactor is Mg(2+).

Its function is as follows. Necessary for normal cell division and for the maintenance of normal septation. The chain is Probable GTP-binding protein EngB from Campylobacter jejuni subsp. doylei (strain ATCC BAA-1458 / RM4099 / 269.97).